The chain runs to 79 residues: Conotoxin TsMSGL-2 (79 aa).

Positions 1-24 are cleaved as a signal peptide; that stretch reads MSGLGIMVLTLLLLVFMATSHQDA. Positions 25–46 are excised as a propeptide; it reads GEKQATQRDAVNVRRRRSIAGR. Cystine bridges form between Cys-52/Cys-64, Cys-56/Cys-73, and Cys-63/Cys-77. Leu-78 carries the post-translational modification Leucine amide.

This sequence belongs to the conotoxin O3 superfamily. Expressed by the venom duct.

It is found in the secreted. This Conus tessulatus (Tessellate cone) protein is Conotoxin TsMSGL-2.